The following is a 392-amino-acid chain: Succinate--CoA ligase [ADP-forming] subunit beta (392 aa).

The 240-residue stretch at 9–248 (KDILRKFGVA…TNEEDPFEVE (240 aa)) folds into the ATP-grasp domain. ATP contacts are provided by residues Lys-50, 57–59 (GRG), Glu-103, Met-106, and Glu-111. Mg(2+) is bound by residues Asn-203 and Asp-217. Residues Asn-268 and 325–327 (GIV) contribute to the substrate site.

Belongs to the succinate/malate CoA ligase beta subunit family. Heterotetramer of two alpha and two beta subunits. The cofactor is Mg(2+).

The catalysed reaction is succinate + ATP + CoA = succinyl-CoA + ADP + phosphate. The enzyme catalyses GTP + succinate + CoA = succinyl-CoA + GDP + phosphate. Its pathway is carbohydrate metabolism; tricarboxylic acid cycle; succinate from succinyl-CoA (ligase route): step 1/1. In terms of biological role, succinyl-CoA synthetase functions in the citric acid cycle (TCA), coupling the hydrolysis of succinyl-CoA to the synthesis of either ATP or GTP and thus represents the only step of substrate-level phosphorylation in the TCA. The beta subunit provides nucleotide specificity of the enzyme and binds the substrate succinate, while the binding sites for coenzyme A and phosphate are found in the alpha subunit. The sequence is that of Succinate--CoA ligase [ADP-forming] subunit beta from Pelodictyon phaeoclathratiforme (strain DSM 5477 / BU-1).